We begin with the raw amino-acid sequence, 105 residues long: ESAT-6-like protein EsxB (105 aa).

The segment at 1 to 23 (MSQGFKTEADVMRNTAHRVDDTN) is disordered. Residues 7–21 (TEADVMRNTAHRVDD) show a composition bias toward basic and acidic residues.

This sequence belongs to the WXG100 family. CFP-10 subfamily. As to quaternary structure, forms a tight 1:1 complex with EsxB.

This chain is ESAT-6-like protein EsxB, found in Corynebacterium diphtheriae (strain ATCC 700971 / NCTC 13129 / Biotype gravis).